The chain runs to 611 residues: Leukotriene A-4 hydrolase (611 aa).

K73 bears the N6-acetyllysine mark. A peptide contacts are provided by residues 135 to 137 (QCQ) and 267 to 272 (PYGGME). H296 contacts Zn(2+). The active-site Proton acceptor is the E297. Zn(2+) contacts are provided by H300 and E319. K337 is subject to N6-acetyllysine. The active-site Proton donor is Y384. K414 carries the N6-acetyllysine modification. At S416 the chain carries Phosphoserine. Position 564 to 566 (564 to 566 (RMK)) interacts with a peptide. N6-acetyllysine is present on K573.

The protein belongs to the peptidase M1 family. In terms of assembly, monomer. The cofactor is Zn(2+). Post-translationally, phosphorylation at Ser-416 inhibits leukotriene-A4 hydrolase activity. activity.

The protein localises to the cytoplasm. It catalyses the reaction leukotriene A4 + H2O = leukotriene B4. The enzyme catalyses (5S,6S)-epoxy-(18R)-hydroxy-(7E,9E,11Z,14Z,16E)-eicosapentaenoate + H2O = resolvin E1. It carries out the reaction (5S,6S)-epoxy-(18S)-hydroxy-(7E,9E,11Z,14Z,16E)-eicosapentaenoate + H2O = 18S-resolvin E1. The catalysed reaction is Release of the N-terminal residue from a tripeptide.. Its pathway is lipid metabolism; leukotriene B4 biosynthesis. Its activity is regulated as follows. Inhibited by bestatin. The epoxide hydrolase activity is restrained by suicide inactivation that involves binding of LTA4 to Tyr-379. 4-(4-benzylphenyl)thiazol-2-amine (ARM1) selectively inhibits the epoxide hydrolase activity. Bifunctional zinc metalloenzyme that comprises both epoxide hydrolase (EH) and aminopeptidase activities. Acts as an epoxide hydrolase to catalyze the conversion of LTA4 to the pro-inflammatory mediator leukotriene B4 (LTB4). Also has aminopeptidase activity, with high affinity for N-terminal arginines of various synthetic tripeptides. In addition to its pro-inflammatory EH activity, may also counteract inflammation by its aminopeptidase activity, which inactivates by cleavage another neutrophil attractant, the tripeptide Pro-Gly-Pro (PGP), a bioactive fragment of collagen generated by the action of matrix metalloproteinase-9 (MMP9) and prolylendopeptidase (PREPL). Involved also in the biosynthesis of resolvin E1 and 18S-resolvin E1 from eicosapentaenoic acid, two lipid mediators that show potent anti-inflammatory and pro-resolving actions. This chain is Leukotriene A-4 hydrolase (LTA4H), found in Bos taurus (Bovine).